A 137-amino-acid chain; its full sequence is Small ribosomal subunit protein bS6 (137 aa).

A disordered region spans residues 113 to 137; that stretch reads EEQREKKNFRKPFIKREEAATKENK. Residues 126 to 137 are compositionally biased toward basic and acidic residues; the sequence is IKREEAATKENK.

This sequence belongs to the bacterial ribosomal protein bS6 family.

In terms of biological role, binds together with bS18 to 16S ribosomal RNA. This Mycoplasma capricolum subsp. capricolum (strain California kid / ATCC 27343 / NCTC 10154) protein is Small ribosomal subunit protein bS6.